The chain runs to 194 residues: dTTP/UTP pyrophosphatase (194 aa).

Asp73 functions as the Proton acceptor in the catalytic mechanism.

It belongs to the Maf family. YhdE subfamily. A divalent metal cation serves as cofactor.

It is found in the cytoplasm. The catalysed reaction is dTTP + H2O = dTMP + diphosphate + H(+). It catalyses the reaction UTP + H2O = UMP + diphosphate + H(+). Nucleoside triphosphate pyrophosphatase that hydrolyzes dTTP and UTP. May have a dual role in cell division arrest and in preventing the incorporation of modified nucleotides into cellular nucleic acids. This is dTTP/UTP pyrophosphatase from Clostridium botulinum (strain ATCC 19397 / Type A).